The sequence spans 470 residues: MVSHRAARRKRASATDLYRTCKQSGTCPPDVVDKVEGTTLADKILQWTSLGIFLGGLGIGTGTGTGGRTGYIPLGGRPNTVVDVSPARPPVVIEPVGPSEPSIVQLVEDSSVITSGTPVPTFTGTSGFEITSSSTTTPAVLDITPSSGSVQITSTSYTNPAFTDPSLIEVPQTGETSGNIFVSTPTSGTHGYEEIPMEVFATHGTGTEPISSTPTPGISRVAGPRLYSRAHQQVRVSNFDFVTHPSSFVTFDNPAFEPVDTTLTYEAADIAPDPDFLDIVRLHRPALTSRKGTVRFSRLGKKATMVTRRGTQIGAQVHYYHDISSIAPAESIELQPLVHAEPSDASDALFDIYADVDNNTYLDTAFNNTRDSGTTYNTGSLPSVASSASTKYANTTIPFSTSWNMPVNTGPDIALPSTTPQLPLVPSGPIDTTYAITIQGSNYYLLPLLYFFLKKRKRIPYFFSDGYVAV.

The short motif at 1 to 12 is the Nuclear localization signal element; sequence MVSHRAARRKRA. Cysteine 21 and cysteine 27 form a disulfide bridge. Residues 451–459 carry the Nuclear localization signal motif; that stretch reads FFLKKRKRI.

Belongs to the papillomaviridae L2 protein family. In terms of assembly, interacts with major capsid protein L1. Interacts with E2; this interaction inhibits E2 transcriptional activity but not the DNA replication function E2. Interacts with host GADD45GIP1. Interacts with host HSPA8; this interaction is required for L2 nuclear translocation. Interacts with host importins KPNB2 and KPNB3. Forms a complex with importin alpha2-beta1 heterodimers via interaction with the importin alpha2 adapter. Interacts with host DYNLT1; this interaction is essential for virus intracellular transport during entry. Interacts (via C-terminus) with host retromer subunits VPS35 and VPS29. In terms of processing, highly phosphorylated.

Its subcellular location is the virion. The protein localises to the host nucleus. It localises to the host early endosome. It is found in the host Golgi apparatus. Its function is as follows. Minor protein of the capsid that localizes along the inner surface of the virion, within the central cavities beneath the L1 pentamers. Plays a role in capsid stabilization through interaction with the major capsid protein L1. Once the virion enters the host cell, L2 escorts the genomic DNA into the nucleus by promoting escape from the endosomal compartments and traffic through the host Golgi network. Mechanistically, the C-terminus of L2 possesses a cell-penetrating peptide that protudes from the host endosome, interacts with host cytoplasmic retromer cargo and thereby mediates the capsid delivery to the host trans-Golgi network. Plays a role through its interaction with host dynein in the intracellular microtubule-dependent transport of viral capsid toward the nucleus. Mediates the viral genome import into the nucleus through binding to host importins. Once within the nucleus, L2 localizes viral genomes to host PML bodies in order to activate early gene expression for establishment of infection. Later on, promotes late gene expression by interacting with the viral E2 protein and by inhibiting its transcriptional activation functions. During virion assembly, encapsidates the genome by direct interaction with the viral DNA. The chain is Minor capsid protein L2 from Human papillomavirus 39.